Consider the following 118-residue polypeptide: Holin-like protein CidA 2 (118 aa).

A run of 4 helical transmembrane segments spans residues 5-27 (MLLL…QGVF), 31-50 (MPGS…TRIL), 62-84 (LLVF…ESFL), and 88-110 (GSII…GYIS).

It belongs to the CidA/LrgA family. CidA subfamily.

It is found in the cell membrane. In terms of biological role, increases the activity of extracellular murein hydrolases possibly by mediating their export via hole formation. Inhibited by the antiholin-like proteins LrgAB. In an unstressed cell, the LrgAB products probably inhibit the function of the CidA protein. When a cell is stressed by the addition of antibiotics or by other factors in the environment, CidA possibly oligomerizes within the bacterial cell membrane, creating lesions that disrupt the proton motive force, which in turn results in loss of cell viability. These lesions are also hypothesized to regulate the subsequent cell lysis by either allowing the murein hydrolases access to the cell wall substrate and/or regulating their activity by a possible change in the cell wall pH that results from loss of membrane potential. This chain is Holin-like protein CidA 2 (cidA2), found in Bacillus anthracis.